Reading from the N-terminus, the 609-residue chain is MFS siderochrome iron transporter 1 (609 aa).

Composition is skewed to basic and acidic residues over residues 1–17 and 25–34; these read MSALTKIREGLAREDNT and PHEKEIHETP. The interval 1–69 is disordered; the sequence is MSALTKIREG…NDSDVPSEDV (69 aa). Transmembrane regions (helical) follow at residues 81 to 101, 125 to 145, 154 to 174, 182 to 202, 220 to 240, 245 to 265, 300 to 320, 329 to 349, 368 to 390, 407 to 427, 432 to 452, 469 to 489, 496 to 516, and 573 to 593; these read LTWGKGSLAALLCLIWTLFLI, LMTTIPIVSDAMTAACYIPMA, AEGFLLMSGFATLGLILMAVS, AAQVFYSVGWGGMIYAVGVLA, SPYMITAFAGSKAAAAFVIDV, WGFGWIALVLPCVTIPLFLVL, VIGIFLFGGGLVVFLLPFNLA, TGYIIAMIIVGFCTLIFFGVW, SVVAACMIDLTYQVSYYTWNYFF, YVNSTFQVVSGVLLFIVGFLI, FYKWTFYFAVPIYIFALGLMI, IFISIGGAVFILVMQLAVLAA, AAALATLYVAGGVGGAVGGAI, and IRMLAAGVGIASLFFIWVPML.

The protein belongs to the major facilitator superfamily.

The protein resides in the cell membrane. In terms of biological role, major facilitator transporter involved in extracellular siderophore uptake. Gibberella zeae produces extracellular coprogen-type siderophores as well as the intracellular siderophore ferricrocin. The role of extracellular siderophores is to supply iron to the fungus during plant infection, and the intracellular ferricrocin is required for intracellular iron distribution and storage with a crucial role in ascus and ascospore development. The protein is MFS siderochrome iron transporter 1 of Gibberella zeae (strain ATCC MYA-4620 / CBS 123657 / FGSC 9075 / NRRL 31084 / PH-1) (Wheat head blight fungus).